The primary structure comprises 161 residues: DNA-directed RNA polymerase 18 kDa subunit (161 aa).

It belongs to the poxviridae DNA-directed RNA polymerase 18 kDa subunit family. In terms of assembly, the DNA-dependent RNA polymerase used for intermediate and late genes expression consists of eight subunits 147 kDa, 133 kDa, 35 kDa, 30 kDa, 22 kDa, 19 kDa, 18 kDa and 7 kDa totalling more than 500 kDa in mass. The same holoenzyme, with the addition of the transcription-specificity factor RAP94, is used for early gene expression.

It localises to the virion. The catalysed reaction is RNA(n) + a ribonucleoside 5'-triphosphate = RNA(n+1) + diphosphate. Its function is as follows. Part of the DNA-dependent RNA polymerase which catalyzes the transcription of viral DNA into RNA using the four ribonucleoside triphosphates as substrates. Responsible for the transcription of early, intermediate and late genes. DNA-dependent RNA polymerase associates with the early transcription factor (ETF) thereby allowing the early genes transcription. Late transcription, and probably also intermediate transcription, require newly synthesized RNA polymerase. This Vertebrata (FPV) protein is DNA-directed RNA polymerase 18 kDa subunit (RPO18).